The sequence spans 370 residues: 4-hydroxy-3-methylbut-2-en-1-yl diphosphate synthase (flavodoxin) (370 aa).

The [4Fe-4S] cluster site is built by cysteine 271, cysteine 274, cysteine 306, and glutamate 313.

The protein belongs to the IspG family. [4Fe-4S] cluster is required as a cofactor.

The catalysed reaction is (2E)-4-hydroxy-3-methylbut-2-enyl diphosphate + oxidized [flavodoxin] + H2O + 2 H(+) = 2-C-methyl-D-erythritol 2,4-cyclic diphosphate + reduced [flavodoxin]. It functions in the pathway isoprenoid biosynthesis; isopentenyl diphosphate biosynthesis via DXP pathway; isopentenyl diphosphate from 1-deoxy-D-xylulose 5-phosphate: step 5/6. Converts 2C-methyl-D-erythritol 2,4-cyclodiphosphate (ME-2,4cPP) into 1-hydroxy-2-methyl-2-(E)-butenyl 4-diphosphate. The chain is 4-hydroxy-3-methylbut-2-en-1-yl diphosphate synthase (flavodoxin) from Actinobacillus pleuropneumoniae serotype 5b (strain L20).